We begin with the raw amino-acid sequence, 394 residues long: Elongation factor Tu (394 aa).

The tr-type G domain maps to 10–204 (KPHVNIGTIG…AVDSYIPQPV (195 aa)). Residues 19–26 (GHVDHGKT) form a G1 region. Position 19–26 (19–26 (GHVDHGKT)) interacts with GTP. Threonine 26 provides a ligand contact to Mg(2+). A G2 region spans residues 60–64 (GITIS). The segment at 81–84 (DCPG) is G3. GTP is bound by residues 81–85 (DCPGH) and 136–139 (NKVD). Positions 136–139 (NKVD) are G4. The tract at residues 174 to 176 (SAL) is G5.

Belongs to the TRAFAC class translation factor GTPase superfamily. Classic translation factor GTPase family. EF-Tu/EF-1A subfamily. Monomer.

It is found in the cytoplasm. It catalyses the reaction GTP + H2O = GDP + phosphate + H(+). Its function is as follows. GTP hydrolase that promotes the GTP-dependent binding of aminoacyl-tRNA to the A-site of ribosomes during protein biosynthesis. The chain is Elongation factor Tu from Rickettsia felis (strain ATCC VR-1525 / URRWXCal2) (Rickettsia azadi).